Reading from the N-terminus, the 285-residue chain is Polyamine aminopropyltransferase (285 aa).

Residues 5-238 form the PABS domain; that stretch reads EMWYETLHTG…GIMTFAWASD (234 aa). An S-methyl-5'-thioadenosine-binding site is contributed by Gln-33. Residues His-64 and Asp-88 each contribute to the spermidine site. S-methyl-5'-thioadenosine contacts are provided by residues Glu-108 and 140–141; that span reads DG. The active-site Proton acceptor is the Asp-158. Residue 158–161 coordinates spermidine; that stretch reads DCTD. Pro-165 provides a ligand contact to S-methyl-5'-thioadenosine.

This sequence belongs to the spermidine/spermine synthase family. In terms of assembly, homodimer or homotetramer.

The protein resides in the cytoplasm. The enzyme catalyses S-adenosyl 3-(methylsulfanyl)propylamine + putrescine = S-methyl-5'-thioadenosine + spermidine + H(+). It functions in the pathway amine and polyamine biosynthesis; spermidine biosynthesis; spermidine from putrescine: step 1/1. Its function is as follows. Catalyzes the irreversible transfer of a propylamine group from the amino donor S-adenosylmethioninamine (decarboxy-AdoMet) to putrescine (1,4-diaminobutane) to yield spermidine. The polypeptide is Polyamine aminopropyltransferase (Erwinia tasmaniensis (strain DSM 17950 / CFBP 7177 / CIP 109463 / NCPPB 4357 / Et1/99)).